The sequence spans 150 residues: S-protein homolog 3 (150 aa).

An N-terminal signal peptide occupies residues 1–23 (MKNILKTQVHVVVIYLLIKIAFS). N-linked (GlcNAc...) asparagine glycans are attached at residues Asn32 and Asn70.

This sequence belongs to the plant self-incompatibility (S1) protein family.

Its subcellular location is the secreted. The protein is S-protein homolog 3 of Arabidopsis thaliana (Mouse-ear cress).